Here is a 297-residue protein sequence, read N- to C-terminus: Protoheme IX farnesyltransferase (297 aa).

9 helical membrane-spanning segments follow: residues 23–43, 49–69, 93–113, 117–137, 144–164, 171–191, 215–235, 238–258, and 275–295; these read VTQL…PGMP, VFGT…NCLI, IQVL…LYHL, LTMW…TVIL, NIVI…AAVA, AWVL…ALAL, RLHI…PYAI, SGAL…WYAW, and FSIL…WVGL.

This sequence belongs to the UbiA prenyltransferase family. Protoheme IX farnesyltransferase subfamily.

The protein resides in the cell inner membrane. The enzyme catalyses heme b + (2E,6E)-farnesyl diphosphate + H2O = Fe(II)-heme o + diphosphate. It functions in the pathway porphyrin-containing compound metabolism; heme O biosynthesis; heme O from protoheme: step 1/1. In terms of biological role, converts heme B (protoheme IX) to heme O by substitution of the vinyl group on carbon 2 of heme B porphyrin ring with a hydroxyethyl farnesyl side group. The protein is Protoheme IX farnesyltransferase of Bordetella pertussis (strain Tohama I / ATCC BAA-589 / NCTC 13251).